We begin with the raw amino-acid sequence, 155 residues long: MLHKKYRPNVAAIIMSPDYPNTCEVFIAERIDIEGAWQFPQGGIDEGETPLEALHRELLEEIGTNEIEILAQYPRWIAYDFPSNMEHKFYAFDGQKQRYFLVRLKHANNIDLNKHTPEFRAYQFIHLKDLLKKIVPFKRQVYRQVIAYFKREGYL.

Residues 5 to 147 (KYRPNVAAII…KRQVYRQVIA (143 aa)) enclose the Nudix hydrolase domain. A Nudix box motif is present at residues 42 to 63 (GGIDEGETPLEALHRELLEEIG).

Belongs to the Nudix hydrolase family. RppH subfamily. The cofactor is a divalent metal cation.

Its function is as follows. Accelerates the degradation of transcripts by removing pyrophosphate from the 5'-end of triphosphorylated RNA, leading to a more labile monophosphorylated state that can stimulate subsequent ribonuclease cleavage. This chain is RNA pyrophosphohydrolase, found in Helicobacter pylori (strain HPAG1).